Consider the following 271-residue polypeptide: 5-deoxy-glucuronate isomerase (271 aa).

This sequence belongs to the isomerase IolB family.

The enzyme catalyses 5-deoxy-D-glucuronate = 5-dehydro-2-deoxy-D-gluconate. The protein operates within polyol metabolism; myo-inositol degradation into acetyl-CoA; acetyl-CoA from myo-inositol: step 4/7. Functionally, involved in the isomerization of 5-deoxy-glucuronate (5DG) to 5-dehydro-2-deoxy-D-gluconate (DKG or 2-deoxy-5-keto-D-gluconate). This Bacillus velezensis (strain DSM 23117 / BGSC 10A6 / LMG 26770 / FZB42) (Bacillus amyloliquefaciens subsp. plantarum) protein is 5-deoxy-glucuronate isomerase.